The sequence spans 906 residues: MVSFGGLARKIFGSSNDRRVKTLRQRAEQITALEKNYENLTDEQLQAKTAEFRAALAEGKSLDSLLPDAFATAREAAKRVLGMRPFDVQLIGGMVLHERGIAEMRTGEGKTLMATLPVYLNALEGKGVHVVTVNDYLATRDAETMGRLYNFLGLTVGVIKHGLDDDERRAAYACDITYGTNNELGFDYLRDNMKYERAQMVQRPHNYAIVDEVDSILIDEARTPLIISGPLEDRSDFYNLIDTFIPPLAEEDYEVDEKQKTAIFTEVGTEKVEKLLEAAGHLKGESLYDIENVAVVHHLNNALRAHKLFQRDKDYIVRNDEIVIIDEFTGRMMPGRRYSEGLHQALEAKEHVTIQPENQTLASITFQNYFRMYNKLSGMTGTAATEAEEFGNIYGLEVLEIPTNLPVQRIDEDDEVYRTVEEKYRAIVRDIRASHEKGQPILVGTTSIEKSEQLAERLRREGIKGFQVLNARYHEQEAYIIAQAGVPGAVTIATNMAGRGTDIQLGGNLEMRVRQELSDVPEGPEREEKIAAIKADIAQLKEKALAAGGLYVLATERHESRRIDNQLRGRSGRQGDPGRSKFFLSLQDDLMRIFGSDRMDGMLQKLGLKEDEAIVHPWINKALEKAQKKVEARNFEIRKNLLKYDDVMNDQRKVIFEQRLEMMDEEDLTETVAEMRHEVIEDMVILRIPKDAYAEKWDIAGLKQDIASKLNLDLPVEEWAKEEGIAEEEFENRIKEAADKAAAEKAERFGPQIMTYVEKSVIMQSLDNLWREHLVNLDHLRSVVGFRGYAQRDPLNEYKTEAFELFQTMLANLREVVISQLMRVEIVREAPPEPQLPPMAGLHIDGTTGENDFDEAIWAEHQHDDRIVPPAQRDPADPRTWGKVSRNEPCPCGSGKKYKHCHGAFE.

Residues Gln-89, 107–111 (GEGKT), and Asp-502 contribute to the ATP site. The disordered stretch occupies residues 868–887 (VPPAQRDPADPRTWGKVSRN). Zn(2+)-binding residues include Cys-890, Cys-892, Cys-901, and His-902.

The protein belongs to the SecA family. As to quaternary structure, monomer and homodimer. Part of the essential Sec protein translocation apparatus which comprises SecA, SecYEG and auxiliary proteins SecDF-YajC and YidC. The cofactor is Zn(2+).

The protein localises to the cell inner membrane. The protein resides in the cytoplasm. The catalysed reaction is ATP + H2O + cellular proteinSide 1 = ADP + phosphate + cellular proteinSide 2.. Part of the Sec protein translocase complex. Interacts with the SecYEG preprotein conducting channel. Has a central role in coupling the hydrolysis of ATP to the transfer of proteins into and across the cell membrane, serving both as a receptor for the preprotein-SecB complex and as an ATP-driven molecular motor driving the stepwise translocation of polypeptide chains across the membrane. This Brucella abortus (strain S19) protein is Protein translocase subunit SecA.